A 134-amino-acid chain; its full sequence is ATP synthase epsilon chain, plastid (134 aa).

Belongs to the ATPase epsilon chain family. F-type ATPases have 2 components, CF(1) - the catalytic core - and CF(0) - the membrane proton channel. CF(1) has five subunits: alpha(3), beta(3), gamma(1), delta(1), epsilon(1). CF(0) has three main subunits: a, b and c.

The protein resides in the plastid membrane. Produces ATP from ADP in the presence of a proton gradient across the membrane. In Prototheca wickerhamii, this protein is ATP synthase epsilon chain, plastid.